The following is a 521-amino-acid chain: Probable cytochrome P450 12d1 distal, mitochondrial (521 aa).

Residues 1-19 constitute a mitochondrion transit peptide; the sequence is MNTLSSARSVAIYVGPVRS. Residue C467 participates in heme binding.

This sequence belongs to the cytochrome P450 family. It depends on heme as a cofactor.

The protein localises to the mitochondrion membrane. In Drosophila melanogaster (Fruit fly), this protein is Probable cytochrome P450 12d1 distal, mitochondrial.